The primary structure comprises 121 residues: Large ribosomal subunit protein bL19 (121 aa).

Belongs to the bacterial ribosomal protein bL19 family.

In terms of biological role, this protein is located at the 30S-50S ribosomal subunit interface and may play a role in the structure and function of the aminoacyl-tRNA binding site. The chain is Large ribosomal subunit protein bL19 from Chlamydia caviae (strain ATCC VR-813 / DSM 19441 / 03DC25 / GPIC) (Chlamydophila caviae).